A 1642-amino-acid chain; its full sequence is MKCAKHPSTISMKLTSVPELPYKKGLLNSSPKPKEKHNAKSKYGKNESMVLRSPPTGESIVRFALPIPLSKTKDKISADEMVRRITTNLKMVVSNLEDTYGACYDNGEKAAEKSEAEGLSIGDDVSSFLLCCSQFTSQLEEAVKEECGALESLYKWFQQQVNQMEEISKDQSNLEELQSDGKTASLNIVQIAKLARKFEDFKSRLKTRKEVMQTKNEDKEIMAETLKHYGLMEKQIEEFITSHSALESQTETESQSGTPSVTTRMARMIKIFENQSTMLEKALNDQQTIESKYKQLETDFQMLIMEKTLLEAEIRRLREIERVKSAAKEEQTKKSGKSEKKKFKEKEKNLSPNREFKSIEELLQIQKEAELLKTEKKTLQGQLKWALEEAERNKTQLEFVLHQKMEMFKEESKTKVGQSQNKSKVKIEDSKDSLPKKSDTQLGGQRKDQISSDQSKRPKKKQLADIDPSAVEDFPPETFKSFTVMPLIEEHRESISSQPKEEMAKASEQSEAEDIEGPLEIPSESSNEDDDLLPEDESPMMEQVTDVGRYKSIYISAEPIDTMSLISRTQSEMETLEAINYDNVLNEGEEQDKKIGKDSDTGRKSKRKRSSKIRKLSTHEEESDIVHYEEATKAKVPSKKRASDPYGDEAYESRGSVSKAQTYTKKQGTHQRGRGSASDAYGDEAYESRGSISKAQTYTRKQGTHQRGRGSVQEEESDTVHYEEVTRAKVPSKKQASDPYGDEAYESQGSVSKAHTHTKKQGTHQRGRGSVHEEESDTMNYEVPRKSKISSRRKGFALPITHQVEMHSSESQGSISKSNTETKKQGTHKRGRDSDADGARTPVSQGSDSKADTERKKHRSKEESTISKDSIPVLDEVQDKTFEHQESGLRLEVQAKKLTFSSQNIHNEESATDIKVEYQNVPSSSQVQLKKQKPLGGEIFTTHFVVPAESHAQLYQTHTPETQIERGTTSGTARLTTIPVEHPKKEASPDNLFPEKKLYITRAPTQTKKQYPPWDAKAETQKKTVKEVQGISEPQTKLNPTMSGIILHLDMDRVVETDLENLEETIVPHVLRSELEIGTDAKNMPETPTSREAVRTEAKGNQDVTISIAKGMKLIGKLKDQHGLSSFASKDTISPGKSLIKSSRDNQDDSLLETKPQENTSDKYHPSKTFPTKVINMLPFSEKSLGSTSANVDVAPKPVYRASRGRSRISKALQQLLKTSEHLKPTSTKNQNADLEKHLYISVRSANKHTQKDKKHGQSNNQKLKKQGALSSTKKQKHKEQPKTETIVENNDKFDDNLMMTTSSPNIKIIKELSKTLNLDGGDIELSDFVFKTASAAKKLENKGPSKTKNLNKESSRDIHILHLTTSAIRTLLLDEEAKIRSLEKKLMKQSTILQKSVSSMKKFMFEEPSRETKMKRKKREKRKIVVKSPHILPITTTQKHTIKEKSEISNLEKPIVRGTDILKKSTSARKKRVLKGKSKSATLPKKCDNFPFDLVRSSSDSSKQEVEEQPKPGNVDKKVSDDSYSPDISTTPTKKHTLKGQSKSRTIYEKGVDLPNNLVLSKSASSIQEFEEQPQPGNVDKKVSDDSYSPDISTSPTKKHTLKGQPKSENSDEKGIKRPNNLHMSASVARKRLLKALSTIP.

A disordered region spans residues Pro-21–Leu-51. The LRR 1 repeat unit spans residues Val-161 to Ala-184. Residues Leu-279–Glu-330 are a coiled coil. An LRR 2 repeat occupies Ile-1310 to Thr-1333.

Exclusively expressed in the testes.

The chain is Coiled-coil domain-containing protein 7A from Mus musculus (Mouse).